We begin with the raw amino-acid sequence, 364 residues long: Protein-glutamate methylesterase/protein-glutamine glutaminase 1 (364 aa).

Residues 6–123 (KVLCVDDSAL…RDGMLDYSEK (118 aa)) form the Response regulatory domain. At D57 the chain carries 4-aspartylphosphate. The CheB-type methylesterase domain occupies 165 to 357 (LVSTEKLIIV…RRIMARLASM (193 aa)). Residues S177, H203, and D299 contribute to the active site.

Belongs to the CheB family. Phosphorylated by CheA. Phosphorylation of the N-terminal regulatory domain activates the methylesterase activity.

The protein localises to the cytoplasm. The catalysed reaction is [protein]-L-glutamate 5-O-methyl ester + H2O = L-glutamyl-[protein] + methanol + H(+). The enzyme catalyses L-glutaminyl-[protein] + H2O = L-glutamyl-[protein] + NH4(+). In terms of biological role, involved in chemotaxis. Part of a chemotaxis signal transduction system that modulates chemotaxis in response to various stimuli. Catalyzes the demethylation of specific methylglutamate residues introduced into the chemoreceptors (methyl-accepting chemotaxis proteins or MCP) by CheR. Also mediates the irreversible deamidation of specific glutamine residues to glutamic acid. The protein is Protein-glutamate methylesterase/protein-glutamine glutaminase 1 of Burkholderia mallei (strain ATCC 23344).